Reading from the N-terminus, the 198-residue chain is 7-methyl-GTP pyrophosphatase (198 aa).

The active-site Proton acceptor is D72.

Belongs to the Maf family. YceF subfamily. A divalent metal cation is required as a cofactor.

The protein localises to the cytoplasm. The catalysed reaction is N(7)-methyl-GTP + H2O = N(7)-methyl-GMP + diphosphate + H(+). Functionally, nucleoside triphosphate pyrophosphatase that hydrolyzes 7-methyl-GTP (m(7)GTP). May have a dual role in cell division arrest and in preventing the incorporation of modified nucleotides into cellular nucleic acids. In Idiomarina loihiensis (strain ATCC BAA-735 / DSM 15497 / L2-TR), this protein is 7-methyl-GTP pyrophosphatase.